Here is a 426-residue protein sequence, read N- to C-terminus: MLDAKYIKDNLQQVAEKLATRGYQFDIAEFEAQEQKRRHLQERTQDLQSQRNTISKEIGQKKAKGEDTSDIFAKVNQINEELKIIEKELKDLQDTINQTLLSMPNLPADDVPVGKDENDNVEIRRWGTPREFHPEAPAKDHADIGEILKMIDFKAAAKVTGSRFMVLKNKIAKLHRALSQFMLDLHTEKHGYEELYVPYLVNNDSLYGTGQLPKFAADLFKLEGDFEYSLIPTAEVPITNLVRDEILDTETLPRYYTAHTPCFRSEAGSYGRDTKGMIRQHQFEKVELVHITAADKGEESLELLTSHAEKVLQKLNLPYRVMKLCTGDMSFSAKKTYDLEVWLPSQNTYREISSCSWCGDFQARRMKARHKNPSMKKPELVHTLNGSGLAVGRTLLAIIENYQQEDGSIMVPDALIKYMGGISVIK.

Residues 36–66 (KRRHLQERTQDLQSQRNTISKEIGQKKAKGE) form a disordered region. The span at 46–55 (DLQSQRNTIS) shows a compositional bias: polar residues. Residue 233 to 235 (TAE) coordinates L-serine. Residue 264 to 266 (RSE) participates in ATP binding. L-serine is bound at residue E287. 351–354 (EISS) is an ATP binding site. S387 contributes to the L-serine binding site.

This sequence belongs to the class-II aminoacyl-tRNA synthetase family. Type-1 seryl-tRNA synthetase subfamily. Homodimer. The tRNA molecule binds across the dimer.

It is found in the cytoplasm. The enzyme catalyses tRNA(Ser) + L-serine + ATP = L-seryl-tRNA(Ser) + AMP + diphosphate + H(+). It carries out the reaction tRNA(Sec) + L-serine + ATP = L-seryl-tRNA(Sec) + AMP + diphosphate + H(+). It participates in aminoacyl-tRNA biosynthesis; selenocysteinyl-tRNA(Sec) biosynthesis; L-seryl-tRNA(Sec) from L-serine and tRNA(Sec): step 1/1. Functionally, catalyzes the attachment of serine to tRNA(Ser). Is also able to aminoacylate tRNA(Sec) with serine, to form the misacylated tRNA L-seryl-tRNA(Sec), which will be further converted into selenocysteinyl-tRNA(Sec). The sequence is that of Serine--tRNA ligase from Francisella tularensis subsp. novicida (strain U112).